The primary structure comprises 258 residues: UPF0246 protein YPK_3600 (258 aa).

The protein belongs to the UPF0246 family.

The chain is UPF0246 protein YPK_3600 from Yersinia pseudotuberculosis serotype O:3 (strain YPIII).